A 98-amino-acid chain; its full sequence is NADH-ubiquinone oxidoreductase chain 4L (98 aa).

3 consecutive transmembrane segments (helical) span residues M1–I21, S28–I48, and A59–V79.

It belongs to the complex I subunit 4L family. Core subunit of respiratory chain NADH dehydrogenase (Complex I) which is composed of 45 different subunits.

It is found in the mitochondrion inner membrane. It catalyses the reaction a ubiquinone + NADH + 5 H(+)(in) = a ubiquinol + NAD(+) + 4 H(+)(out). Functionally, core subunit of the mitochondrial membrane respiratory chain NADH dehydrogenase (Complex I) which catalyzes electron transfer from NADH through the respiratory chain, using ubiquinone as an electron acceptor. Part of the enzyme membrane arm which is embedded in the lipid bilayer and involved in proton translocation. The chain is NADH-ubiquinone oxidoreductase chain 4L (MT-ND4L) from Vombatus ursinus (Common wombat).